Reading from the N-terminus, the 250-residue chain is 2,3-bisphosphoglycerate-dependent phosphoglycerate mutase (250 aa).

Residues 10–17 (RHGESQWN), 23–24 (TG), R62, 89–92 (ERHY), K100, 116–117 (RR), and 185–186 (GN) contribute to the substrate site. H11 (tele-phosphohistidine intermediate) is an active-site residue. The active-site Proton donor/acceptor is E89.

Belongs to the phosphoglycerate mutase family. BPG-dependent PGAM subfamily. In terms of assembly, homodimer.

It catalyses the reaction (2R)-2-phosphoglycerate = (2R)-3-phosphoglycerate. It participates in carbohydrate degradation; glycolysis; pyruvate from D-glyceraldehyde 3-phosphate: step 3/5. In terms of biological role, catalyzes the interconversion of 2-phosphoglycerate and 3-phosphoglycerate. The chain is 2,3-bisphosphoglycerate-dependent phosphoglycerate mutase from Salmonella dublin (strain CT_02021853).